A 628-amino-acid polypeptide reads, in one-letter code: Vacuolar-sorting receptor 3 (628 aa).

An N-terminal signal peptide occupies residues 1–24; that stretch reads MKQLLCYLPWLLLLTLLVSPLNDA. The Lumenal segment spans residues 25 to 569; it reads RFVVEKNSLS…SKTGAQVRSA (545 aa). One can recognise a PA domain in the interval 56-168; the sequence is QYGGSMAGTV…GFGEKLKKAI (113 aa). N-linked (GlcNAc...) asparagine glycans are attached at residues Asn-148, Asn-294, and Asn-434. EGF-like domains are found at residues 416–466 and 469–516; these read ESNE…SHCE and GPGR…KKCE. 7 disulfide bridges follow: Cys-420–Cys-438, Cys-427–Cys-447, Cys-449–Cys-465, Cys-473–Cys-493, Cys-480–Cys-501, Cys-503–Cys-515, and Cys-545–Cys-558. Residues 517 to 559 enclose the EGF-like 3; calcium-binding domain; the sequence is DINECKEKKACQCPECSCKNTWGSYECSCSGDLLYIRDHDTCI. A helical transmembrane segment spans residues 570-590; the sequence is WAAVWLIMLSLGLAAAGAYLV. Topologically, residues 591–628 are cytoplasmic; it reads YKYRLRQYMDSEIRAIMAQYMPLDSQPEIPNHVNDERA. Positions 610 to 613 match the Tyrosine-based internalization motif motif; the sequence is YMPL.

It belongs to the VSR (BP-80) family. As to expression, expressed in seeds, seedlings, roots, leaves, flowers and siliques.

It localises to the membrane. Its subcellular location is the golgi apparatus membrane. The protein resides in the cytoplasmic vesicle. The protein localises to the clathrin-coated vesicle membrane. It is found in the prevacuolar compartment membrane. Vacuolar-sorting receptor (VSR) involved in clathrin-coated vesicles sorting from Golgi apparatus to vacuoles. The protein is Vacuolar-sorting receptor 3 (VSR3) of Arabidopsis thaliana (Mouse-ear cress).